Reading from the N-terminus, the 127-residue chain is Small ribosomal subunit protein bS6 (127 aa).

The interval 102 to 127 (IMQGAEKGKSSRKEKVDAEAEASEEA) is disordered. The segment covering 107–119 (EKGKSSRKEKVDA) has biased composition (basic and acidic residues).

This sequence belongs to the bacterial ribosomal protein bS6 family.

Binds together with bS18 to 16S ribosomal RNA. The sequence is that of Small ribosomal subunit protein bS6 from Coxiella burnetii (strain CbuK_Q154) (Coxiella burnetii (strain Q154)).